The following is a 315-amino-acid chain: Neuroguidin (315 aa).

A2 is subject to N-acetylalanine. The stretch at 7 to 41 (LESDVSSSITLLKNLQEQVMAVTAQIQALTTKVRA) forms a coiled coil. Residues 41 to 174 (AGTYSTEKGL…KGSAKKYVPP (134 aa)) are necessary for interaction with EIF4E. A phosphoserine mark is found at S121, S142, and S143. The interval 123–190 (SENDPLRFKP…YDETEAEREQ (68 aa)) is disordered. Over residues 144 to 155 (EDEEESEAEEGQ) the composition is skewed to acidic residues. A compositionally biased stretch (basic and acidic residues) spans 180-190 (HYDETEAEREQ). Positions 181–203 (YDETEAEREQKRLEKAKRRALSS) form a coiled coil. Phosphoserine occurs at positions 204 and 214. 2 stretches are compositionally biased toward basic and acidic residues: residues 212 to 225 (QYSDAPEEIRDARH) and 232 to 241 (SQEDQHRVNY). Disordered stretches follow at residues 212–243 (QYSDAPEEIRDARHPHVTRQSQEDQHRVNYEE) and 284–315 (GTAHLDEDQNPVKKRKKLPKKGRKKKGFRRRW). The span at 295–315 (VKKRKKLPKKGRKKKGFRRRW) shows a compositional bias: basic residues.

Belongs to the SAS10 family. Interacts with CPEB1 and EIF4E. As to expression, expressed in testis, ovary, spleen, kidney, hippocampus and cerebellum (at protein level). Expressed in testis, ovary, spleen, kidney, brain.

The protein localises to the nucleus. It localises to the nucleolus. It is found in the chromosome. The protein resides in the centromere. Its subcellular location is the cytoplasm. The protein localises to the cell projection. It localises to the axon. It is found in the dendrite. The protein resides in the filopodium. Part of the small subunit (SSU) processome, first precursor of the small eukaryotic ribosomal subunit. During the assembly of the SSU processome in the nucleolus, many ribosome biogenesis factors, an RNA chaperone and ribosomal proteins associate with the nascent pre-rRNA and work in concert to generate RNA folding, modifications, rearrangements and cleavage as well as targeted degradation of pre-ribosomal RNA by the RNA exosome. Its dissociation from the complex determines the transition from state pre-A1 to state pre-A1*. Inhibits mRNA translation in a cytoplasmic polyadenylation element (CPE)-dependent manner. The polypeptide is Neuroguidin (Ngdn) (Mus musculus (Mouse)).